A 1101-amino-acid chain; its full sequence is Cytospin-A (1101 aa).

Disordered stretches follow at residues 1-170 (MRKA…NQIS) and 280-366 (SDCG…SGNA). Composition is skewed to polar residues over residues 29–48 (ESSA…LSKA) and 64–86 (ASNS…TAMS). The segment covering 93–110 (RSSAGSSSNTKRSGSSGA) has biased composition (low complexity). Basic and acidic residues-rich tracts occupy residues 114–125 (GSSRERLRERSR) and 151–165 (GRTD…KSKS). A coiled-coil region spans residues 162–254 (KSKSDNQISD…LKDRLNALGF (93 aa)). Residues 333–355 (LTSSDDALDAPSSSSESEGLPST) are compositionally biased toward low complexity. Coiled coils occupy residues 373–427 (CLTE…MDSL) and 492–785 (QHLS…RGRV). The tract at residues 923 to 978 (SISVSRRSSEELKRDISVPDGSSAPSLMVMTSPSPQLSLSSSSPTASVTPTARSRI) is disordered. Basic and acidic residues predominate over residues 929-939 (RSSEELKRDIS). The span at 953–975 (TSPSPQLSLSSSSPTASVTPTAR) shows a compositional bias: low complexity. The Calponin-homology (CH) domain maps to 995–1100 (GSKRNALLKW…YVTSIYKYFE (106 aa)).

This sequence belongs to the cytospin-A family. In terms of assembly, may interact with both microtubules and actin cytoskeleton.

The protein resides in the cytoplasm. The protein localises to the cytoskeleton. Its subcellular location is the spindle. It localises to the cell junction. It is found in the gap junction. Functionally, involved in cytokinesis and spindle organization. May play a role in actin cytoskeleton organization and microtubule stabilization and hence required for proper cell adhesion and migration. The chain is Cytospin-A (specc1l) from Xenopus tropicalis (Western clawed frog).